Reading from the N-terminus, the 376-residue chain is Fructose-1,6-bisphosphate aldolase/phosphatase (376 aa).

The active-site Proton acceptor; for FBP phosphatase activity is Asp-11. Mg(2+) is bound by residues Asp-11, His-18, Asp-49, and Asp-50. His-18 provides a ligand contact to beta-D-fructose 1,6-bisphosphate. Position 18 (His-18) interacts with dihydroxyacetone phosphate. Position 87 (Tyr-87) interacts with beta-D-fructose 1,6-bisphosphate. Residue Gln-91 coordinates Mg(2+). 100-101 (GN) contacts beta-D-fructose 1,6-bisphosphate. Residue Asp-128 participates in Mg(2+) binding. Lys-129 lines the beta-D-fructose 1,6-bisphosphate pocket. Residue Lys-129 coordinates dihydroxyacetone phosphate. Tyr-224 functions as the Proton donor/acceptor; for FBP aldolase activity in the catalytic mechanism. Residues Lys-227, Asp-228, and Asp-229 each coordinate Mg(2+). Lys-227 (schiff-base intermediate with DHAP; for FBP aldolase activity) is an active-site residue. Beta-D-fructose 1,6-bisphosphate contacts are provided by residues 237 to 238 (QK), Arg-261, and Tyr-342. Residue Arg-261 coordinates dihydroxyacetone phosphate. Residues 357–376 (MVPLKDSGPAGTGRAYEDPD) are disordered.

This sequence belongs to the FBP aldolase/phosphatase family. Homooctamer; dimer of tetramers. It depends on Mg(2+) as a cofactor.

The catalysed reaction is beta-D-fructose 1,6-bisphosphate + H2O = beta-D-fructose 6-phosphate + phosphate. It catalyses the reaction beta-D-fructose 1,6-bisphosphate = D-glyceraldehyde 3-phosphate + dihydroxyacetone phosphate. It participates in carbohydrate biosynthesis; gluconeogenesis. In terms of biological role, catalyzes two subsequent steps in gluconeogenesis: the aldol condensation of dihydroxyacetone phosphate (DHAP) and glyceraldehyde-3-phosphate (GA3P) to fructose-1,6-bisphosphate (FBP), and the dephosphorylation of FBP to fructose-6-phosphate (F6P). The sequence is that of Fructose-1,6-bisphosphate aldolase/phosphatase from Cenarchaeum symbiosum (strain A).